Consider the following 104-residue polypeptide: Protamine-3 (104 aa).

The segment at methionine 1–serine 104 is disordered. Positions glutamate 45 to glutamine 70 are enriched in acidic residues. Serine 96 is subject to Phosphoserine.

It belongs to the protamine P3 family. As to expression, testis.

The protein localises to the nucleus. The protein resides in the chromosome. Functionally, protamines substitute for histones in the chromatin of sperm during the haploid phase of spermatogenesis. They compact sperm DNA into a highly condensed, stable and inactive complex. The polypeptide is Protamine-3 (Prm3) (Rattus norvegicus (Rat)).